Here is a 144-residue protein sequence, read N- to C-terminus: Nucleoside diphosphate kinase (144 aa).

Residues Lys11, Phe59, Arg87, Thr93, Arg104, and Asn114 each contribute to the ATP site. The active-site Pros-phosphohistidine intermediate is the His117.

This sequence belongs to the NDK family. In terms of assembly, homotetramer. Mg(2+) serves as cofactor.

It localises to the cytoplasm. It carries out the reaction a 2'-deoxyribonucleoside 5'-diphosphate + ATP = a 2'-deoxyribonucleoside 5'-triphosphate + ADP. The enzyme catalyses a ribonucleoside 5'-diphosphate + ATP = a ribonucleoside 5'-triphosphate + ADP. Its function is as follows. Major role in the synthesis of nucleoside triphosphates other than ATP. The ATP gamma phosphate is transferred to the NDP beta phosphate via a ping-pong mechanism, using a phosphorylated active-site intermediate. This chain is Nucleoside diphosphate kinase, found in Aliivibrio salmonicida (strain LFI1238) (Vibrio salmonicida (strain LFI1238)).